The primary structure comprises 136 residues: MACKRQTSLEKDKELVSSIVTAKSMIDRFFWSILSFLLTNLVFLFVAFLILIIYLISEITQQFAFAFIATIVFIIFYNILFLSYLLTMYIKGLKQIEQKSRYLLLVLDVKADELLPFSFLGSLRKSHMLEEMLLEQ.

2 helical membrane passes run 36–56 (FLLT…IYLI) and 63–83 (FAFA…LFLS).

The protein resides in the cell membrane. This is an uncharacterized protein from Mycoplasma pneumoniae (strain ATCC 29342 / M129 / Subtype 1) (Mycoplasmoides pneumoniae).